A 532-amino-acid chain; its full sequence is 2,3-bisphosphoglycerate-independent phosphoglycerate mutase (532 aa).

The Mn(2+) site is built by aspartate 15 and serine 65. Serine 65 functions as the Phosphoserine intermediate in the catalytic mechanism. Substrate is bound by residues histidine 126, 156–157 (RD), arginine 188, arginine 194, 258–261 (RPDR), and lysine 331. Mn(2+) contacts are provided by aspartate 398, histidine 402, aspartate 439, histidine 440, and histidine 457.

This sequence belongs to the BPG-independent phosphoglycerate mutase family. As to quaternary structure, monomer. Mn(2+) serves as cofactor.

The enzyme catalyses (2R)-2-phosphoglycerate = (2R)-3-phosphoglycerate. It functions in the pathway carbohydrate degradation; glycolysis; pyruvate from D-glyceraldehyde 3-phosphate: step 3/5. Functionally, catalyzes the interconversion of 2-phosphoglycerate and 3-phosphoglycerate. The protein is 2,3-bisphosphoglycerate-independent phosphoglycerate mutase of Microcystis aeruginosa (strain NIES-843 / IAM M-2473).